The chain runs to 143 residues: Transcription antitermination protein NusB (143 aa).

It belongs to the NusB family.

Involved in transcription antitermination. Required for transcription of ribosomal RNA (rRNA) genes. Binds specifically to the boxA antiterminator sequence of the ribosomal RNA (rrn) operons. This chain is Transcription antitermination protein NusB, found in Methylacidiphilum infernorum (isolate V4) (Methylokorus infernorum (strain V4)).